A 588-amino-acid polypeptide reads, in one-letter code: Sentrin-specific protease 2 (588 aa).

The Nuclear localization signal signature appears at lysine 28 to arginine 31. Residue serine 32 is modified to Phosphoserine. The Nuclear localization signal signature appears at proline 47–arginine 52. Residues glutamate 157–glutamine 184 are disordered. Positions asparagine 172 to glutamine 184 are enriched in polar residues. Positions methionine 316–glycine 331 match the Nuclear export signal motif. Phosphoserine occurs at positions 332 and 343. The interval leucine 394–isoleucine 558 is protease. Catalysis depends on residues histidine 477 and aspartate 494. Cysteine 547 (nucleophile) is an active-site residue.

This sequence belongs to the peptidase C48 family. As to quaternary structure, binds to SUMO2 and SUMO3. Interacts with the C-terminal domain of NUP153 via its N-terminus. Interacts with MTA1. Polyubiquitinated; which leads to proteasomal degradation. In terms of tissue distribution, highly expressed in testis. Detected in brain, heart and thymus.

It is found in the nucleus. The protein localises to the nuclear pore complex. The protein resides in the nucleus membrane. It localises to the cytoplasm. Its subcellular location is the cytoplasmic vesicle. It is found in the PML body. Its function is as follows. Protease that catalyzes two essential functions in the SUMO pathway. The first is the hydrolysis of an alpha-linked peptide bond at the C-terminal end of the small ubiquitin-like modifier (SUMO) propeptides, SUMO1, SUMO2 and SUMO3 leading to the mature form of the proteins. The second is the deconjugation of SUMO1, SUMO2 and SUMO3 from targeted proteins, by cleaving an epsilon-linked peptide bond between the C-terminal glycine of the mature SUMO and the lysine epsilon-amino group of the target protein. May down-regulate CTNNB1 levels and thereby modulate the Wnt pathway. Deconjugates SUMO2 from MTA1. Plays a dynamic role in adipogenesis by desumoylating and promoting the stabilization of CEBPB. Acts as a regulator of the cGAS-STING pathway by catalyzing desumoylation of CGAS and STING1 during the late phase of viral infection. Activates transcription. This is Sentrin-specific protease 2 (Senp2) from Mus musculus (Mouse).